The chain runs to 712 residues: MVVATTIALYASPASTVCSTAHQINAHISCDLDLNSRSSSASSSTSSPTIGGLSLLFSGASVKSSSSSSSSHPSVGEELASIRHDRSEDRTLSGSFCYSPSKFIGSSYLKRDHQSPVSVLHGPISSGNSPPMRISRDRNLDGGSALRVGSSRLFNGFVRKAIGSCVDYDTDSVLVDEQLPFTMDDGFEGERRQPYARDLLRRAQLKHKIFEDESVIKAFYEAEKAHRGQMRATGDPYLQHCVETAMLLADIGANSTVVVAGILHDTLDDSFMSYDYILRTFGSGVADLVEGVSQLSKLARENNTACKTVEADRLHTMFLAMADARAVLIKLADRLHNMMTLYALPPVKRQRFAKETLEIFAPLANRLGISSWKVKLENLCFKHLHPDQHHEMSDMLEDSFDEAMITSAIEKLEQALKKEGISYHVVSGRHKSLYSIYCKMLKKKLTMDEIHDIHGLRLIVDNEKDCYKALGVVHKLWSEVPGKLKDYISHPKFNGYQSLHTVVMGDGTIPLEVQIRTKEMHLQAEFGFAAHWRYKEGDCKHSSFVLQMVEWARWVVTWHFETMSKDGSSICSSEPLCSFPSHAEDCPFSYKPSGNQEGPVYVIVIENEKMSVQEFPENSTVSDLLRRAGPGSSRWSMYSIPAKEELRPRLNQTPVSDLKCKLKMGDVVELTPAIPDKSLTEYREEIQRMYDRGLAFSRPHRAATGTMVGWGS.

The transit peptide at 1–64 (MVVATTIALY…LLFSGASVKS (64 aa)) directs the protein to the chloroplast. The segment covering 65–74 (SSSSSSSHPS) has biased composition (low complexity). Residues 65 to 84 (SSSSSSSHPSVGEELASIRH) form a disordered region. Positions 237–338 (YLQHCVETAM…IKLADRLHNM (102 aa)) constitute an HD domain.

Belongs to the RelA/SpoT family.

The protein localises to the plastid. It localises to the chloroplast. It catalyses the reaction GTP + ATP = guanosine 3'-diphosphate 5'-triphosphate + AMP. Its function is as follows. Probable ppGpp (guanosine 3'-diphosphate 5'-diphosphate) synthetase that may be involved in a rapid plant ppGpp-mediated response to pathogens and other stresses. In Arabidopsis thaliana (Mouse-ear cress), this protein is Probable GTP diphosphokinase RSH3, chloroplastic (RSH3).